A 334-amino-acid polypeptide reads, in one-letter code: Holliday junction branch migration complex subunit RuvB (334 aa).

Residues 4 to 186 (ADRLIAPENP…FGITQRLEYY (183 aa)) form a large ATPase domain (RuvB-L) region. ATP contacts are provided by residues isoleucine 25, arginine 26, glycine 67, lysine 70, threonine 71, threonine 72, 133–135 (EDY), arginine 176, tyrosine 186, and arginine 223. Residue threonine 71 coordinates Mg(2+). The small ATPAse domain (RuvB-S) stretch occupies residues 187 to 257 (KVQDLQNIVQ…VADKALNMLD (71 aa)). Residues 260-334 (AQGFDYMDRK…RAYLHFGIEK (75 aa)) are head domain (RuvB-H). DNA is bound by residues arginine 315 and arginine 320.

The protein belongs to the RuvB family. As to quaternary structure, homohexamer. Forms an RuvA(8)-RuvB(12)-Holliday junction (HJ) complex. HJ DNA is sandwiched between 2 RuvA tetramers; dsDNA enters through RuvA and exits via RuvB. An RuvB hexamer assembles on each DNA strand where it exits the tetramer. Each RuvB hexamer is contacted by two RuvA subunits (via domain III) on 2 adjacent RuvB subunits; this complex drives branch migration. In the full resolvosome a probable DNA-RuvA(4)-RuvB(12)-RuvC(2) complex forms which resolves the HJ.

The protein resides in the cytoplasm. It carries out the reaction ATP + H2O = ADP + phosphate + H(+). Functionally, the RuvA-RuvB-RuvC complex processes Holliday junction (HJ) DNA during genetic recombination and DNA repair, while the RuvA-RuvB complex plays an important role in the rescue of blocked DNA replication forks via replication fork reversal (RFR). RuvA specifically binds to HJ cruciform DNA, conferring on it an open structure. The RuvB hexamer acts as an ATP-dependent pump, pulling dsDNA into and through the RuvAB complex. RuvB forms 2 homohexamers on either side of HJ DNA bound by 1 or 2 RuvA tetramers; 4 subunits per hexamer contact DNA at a time. Coordinated motions by a converter formed by DNA-disengaged RuvB subunits stimulates ATP hydrolysis and nucleotide exchange. Immobilization of the converter enables RuvB to convert the ATP-contained energy into a lever motion, pulling 2 nucleotides of DNA out of the RuvA tetramer per ATP hydrolyzed, thus driving DNA branch migration. The RuvB motors rotate together with the DNA substrate, which together with the progressing nucleotide cycle form the mechanistic basis for DNA recombination by continuous HJ branch migration. Branch migration allows RuvC to scan DNA until it finds its consensus sequence, where it cleaves and resolves cruciform DNA. This is Holliday junction branch migration complex subunit RuvB from Vibrio parahaemolyticus serotype O3:K6 (strain RIMD 2210633).